We begin with the raw amino-acid sequence, 808 residues long: DNA gyrase subunit B (808 aa).

The Toprim domain occupies 429–544 (SELFIVEGDS…KGYLYIAQPP (116 aa)). 3 residues coordinate Mg(2+): glutamate 435, aspartate 509, and aspartate 511.

This sequence belongs to the type II topoisomerase GyrB family. As to quaternary structure, heterotetramer, composed of two GyrA and two GyrB chains. In the heterotetramer, GyrA contains the active site tyrosine that forms a transient covalent intermediate with DNA, while GyrB binds cofactors and catalyzes ATP hydrolysis. Requires Mg(2+) as cofactor. It depends on Mn(2+) as a cofactor. Ca(2+) is required as a cofactor.

Its subcellular location is the cytoplasm. It catalyses the reaction ATP-dependent breakage, passage and rejoining of double-stranded DNA.. Functionally, a type II topoisomerase that negatively supercoils closed circular double-stranded (ds) DNA in an ATP-dependent manner to modulate DNA topology and maintain chromosomes in an underwound state. Negative supercoiling favors strand separation, and DNA replication, transcription, recombination and repair, all of which involve strand separation. Also able to catalyze the interconversion of other topological isomers of dsDNA rings, including catenanes and knotted rings. Type II topoisomerases break and join 2 DNA strands simultaneously in an ATP-dependent manner. This chain is DNA gyrase subunit B, found in Rickettsia bellii (strain RML369-C).